The following is a 451-amino-acid chain: UPF0210 protein NMA1908 (451 aa).

It belongs to the UPF0210 family. Homodimer.

This Neisseria meningitidis serogroup A / serotype 4A (strain DSM 15465 / Z2491) protein is UPF0210 protein NMA1908.